The primary structure comprises 144 residues: 6-pyruvoyl tetrahydrobiopterin synthase (144 aa).

The residue at position 18 (Ser18) is a Phosphoserine. Residue His23 participates in Zn(2+) binding. Ser27 is subject to Phosphoserine. Cys42 functions as the Proton acceptor in the catalytic mechanism. 2 residues coordinate Zn(2+): His48 and His50. Residue His89 is the Charge relay system of the active site. Tyr127 is modified (phosphotyrosine). Catalysis depends on Glu133, which acts as the Charge relay system.

This sequence belongs to the PTPS family. Homodimer. Homohexamer formed of two homotrimers in a head to head fashion. The cofactor is Zn(2+). In terms of processing, phosphorylation of Ser-18 is required for maximal enzyme activity.

It carries out the reaction 7,8-dihydroneopterin 3'-triphosphate = 6-pyruvoyl-5,6,7,8-tetrahydropterin + triphosphate + H(+). It participates in cofactor biosynthesis; tetrahydrobiopterin biosynthesis; tetrahydrobiopterin from 7,8-dihydroneopterin triphosphate: step 1/3. In terms of biological role, involved in the biosynthesis of tetrahydrobiopterin, an essential cofactor of aromatic amino acid hydroxylases. Catalyzes the transformation of 7,8-dihydroneopterin triphosphate into 6-pyruvoyl tetrahydropterin. The chain is 6-pyruvoyl tetrahydrobiopterin synthase from Mus musculus (Mouse).